The following is a 274-amino-acid chain: MSNKIAILLAVLVAVVACAEAQANQRHRLVRPSPSFSPRPRYAVGQRIVGGFEIDVSDAPYQVSLQYNKRHNCGGSVLSSKWVLTAAHCTAGASPSSLTVRLGTSRHASGGTVVRVARVVQHPKYDSSSIDFDYSLLELEDELTFSDSVQPVGLPKQDETVKDGTMTTVSGWGNTQSAAESNAVLRAANVPTVNQKECNKAYSEFGGVTDRMLCAGYQQGGKDACQGDSGGPLVADGKLVGVVSWGYGCAQAGYPGVYSRVAVVRDWVRENSGV.

Positions 1–18 are cleaved as a signal peptide; sequence MSNKIAILLAVLVAVVAC. Positions 19–47 are cleaved as a propeptide — activation peptide; that stretch reads AEAQANQRHRLVRPSPSFSPRPRYAVGQR. Residues 48–273 enclose the Peptidase S1 domain; that stretch reads IVGGFEIDVS…VRDWVRENSG (226 aa). A disulfide bond links Cys73 and Cys89. Active-site charge relay system residues include His88 and Asp133. 2 disulfides stabilise this stretch: Cys198–Cys214 and Cys225–Cys249. The Charge relay system role is filled by Ser229.

Belongs to the peptidase S1 family. Constitutively expressed at low level in the gut of adult females. Also expressed in the gut of male and female pupae.

Its subcellular location is the secreted. It catalyses the reaction Preferential cleavage: Arg-|-Xaa, Lys-|-Xaa.. In terms of biological role, major function may be to aid in digestion of the blood meal. The chain is Trypsin-1 (TRYP1) from Anopheles gambiae (African malaria mosquito).